The sequence spans 440 residues: Aspartokinase (440 aa).

The protein belongs to the aspartokinase family.

It catalyses the reaction L-aspartate + ATP = 4-phospho-L-aspartate + ADP. The protein operates within amino-acid biosynthesis; L-lysine biosynthesis via DAP pathway; (S)-tetrahydrodipicolinate from L-aspartate: step 1/4. It participates in amino-acid biosynthesis; L-methionine biosynthesis via de novo pathway; L-homoserine from L-aspartate: step 1/3. Its pathway is amino-acid biosynthesis; L-threonine biosynthesis; L-threonine from L-aspartate: step 1/5. The polypeptide is Aspartokinase (lysC) (Chlamydia pneumoniae (Chlamydophila pneumoniae)).